The following is a 562-amino-acid chain: Dihydroxy-acid dehydratase (562 aa).

Cys-53 lines the [2Fe-2S] cluster pocket. Residue Asp-85 coordinates Mg(2+). [2Fe-2S] cluster is bound at residue Cys-126. Residues Asp-127 and Lys-128 each coordinate Mg(2+). At Lys-128 the chain carries N6-carboxylysine. Cys-198 contributes to the [2Fe-2S] cluster binding site. Glu-449 lines the Mg(2+) pocket. Residue Ser-475 is the Proton acceptor of the active site.

Belongs to the IlvD/Edd family. Homodimer. [2Fe-2S] cluster serves as cofactor. Requires Mg(2+) as cofactor.

The enzyme catalyses (2R)-2,3-dihydroxy-3-methylbutanoate = 3-methyl-2-oxobutanoate + H2O. The catalysed reaction is (2R,3R)-2,3-dihydroxy-3-methylpentanoate = (S)-3-methyl-2-oxopentanoate + H2O. It participates in amino-acid biosynthesis; L-isoleucine biosynthesis; L-isoleucine from 2-oxobutanoate: step 3/4. It functions in the pathway amino-acid biosynthesis; L-valine biosynthesis; L-valine from pyruvate: step 3/4. Functions in the biosynthesis of branched-chain amino acids. Catalyzes the dehydration of (2R,3R)-2,3-dihydroxy-3-methylpentanoate (2,3-dihydroxy-3-methylvalerate) into 2-oxo-3-methylpentanoate (2-oxo-3-methylvalerate) and of (2R)-2,3-dihydroxy-3-methylbutanoate (2,3-dihydroxyisovalerate) into 2-oxo-3-methylbutanoate (2-oxoisovalerate), the penultimate precursor to L-isoleucine and L-valine, respectively. This is Dihydroxy-acid dehydratase from Methylococcus capsulatus (strain ATCC 33009 / NCIMB 11132 / Bath).